The primary structure comprises 360 residues: Membrane-bound lytic murein transglycosylase C (360 aa).

A signal peptide spans Met1–Ser16. Cys17 carries the N-palmitoyl cysteine lipid modification. Cys17 carries the S-diacylglycerol cysteine lipid modification.

It belongs to the transglycosylase Slt family.

It localises to the cell outer membrane. It carries out the reaction Exolytic cleavage of the (1-&gt;4)-beta-glycosidic linkage between N-acetylmuramic acid (MurNAc) and N-acetylglucosamine (GlcNAc) residues in peptidoglycan, from either the reducing or the non-reducing ends of the peptidoglycan chains, with concomitant formation of a 1,6-anhydrobond in the MurNAc residue.. Murein-degrading enzyme. May play a role in recycling of muropeptides during cell elongation and/or cell division. This Klebsiella pneumoniae (strain 342) protein is Membrane-bound lytic murein transglycosylase C.